Here is a 124-residue protein sequence, read N- to C-terminus: Small ribosomal subunit protein uS13 (124 aa).

The segment at G95–A124 is disordered.

Belongs to the universal ribosomal protein uS13 family. Part of the 30S ribosomal subunit. Forms a loose heterodimer with protein S19. Forms two bridges to the 50S subunit in the 70S ribosome.

In terms of biological role, located at the top of the head of the 30S subunit, it contacts several helices of the 16S rRNA. In the 70S ribosome it contacts the 23S rRNA (bridge B1a) and protein L5 of the 50S subunit (bridge B1b), connecting the 2 subunits; these bridges are implicated in subunit movement. Contacts the tRNAs in the A and P-sites. The polypeptide is Small ribosomal subunit protein uS13 (Syntrophobacter fumaroxidans (strain DSM 10017 / MPOB)).